The following is a 3066-amino-acid chain: Serine-protein kinase ATM (3066 aa).

Position 2 is an N-acetylserine (serine 2). Serine 367 is subject to Phosphoserine; by autocatalysis. The segment at 829–862 is disordered; the sequence is LDHGVHPGEDDEDGGGCDSLMEAEGPSSTGLSTA. Residues 1380 to 1389 form an interaction with ABL1 region; it reads DPAPNPPYFP. A Phosphoserine; by autocatalysis modification is found at serine 1899. The FAT domain occupies 1946–2576; sequence EVAKVAQSCS…LFIILALANA (631 aa). Over residues 1973 to 1982 the composition is skewed to basic and acidic residues; sequence TDEQEKRSPT. Disordered stretches follow at residues 1973 to 2000 and 2585 to 2607; these read TDEQ…EKSK and PETT…LDED. The segment covering 1985 to 1996 has biased composition (polar residues); that stretch reads EGSQGTTISSLS. Serine 1987 bears the Phosphoserine; by autocatalysis mark. Positions 2597-2607 are enriched in basic and acidic residues; the sequence is TSKENSHLDED. One can recognise a PI3K/PI4K catalytic domain in the interval 2696-3009; the sequence is FKTEFRLAGG…ECKQSLSDTD (314 aa). The segment at 2702-2708 is G-loop; sequence LAGGLNL. The segment at 2877–2885 is catalytic loop; the sequence is GLGDRHVQN. The interval 2897 to 2921 is activation loop; it reads HIDLGVAFEQGKILPTPETVPFRLS. Positions 2986-3007 are disordered; the sequence is DESDLHSTPNADDQECKQSLSD. Positions 2991 to 3007 are enriched in polar residues; that stretch reads HSTPNADDQECKQSLSD. Serine 3006 carries the phosphoserine modification. Lysine 3026 bears the N6-acetyllysine mark. Residues 3034-3066 enclose the FATC domain; sequence TVLSVGGQVNLLIQQAMDPKNLSRLFPGWKAWV. Residues 3056-3058 carry the Microbody targeting signal; atypical motif; sequence SRL.

It belongs to the PI3/PI4-kinase family. ATM subfamily. In terms of assembly, homodimer. Dimers or tetramers in inactive state. On DNA damage, autophosphorylation dissociates ATM into monomers rendering them catalytically active. Binds p53/TP53, ABL1, BRCA1 and TERF1. Interacts with NBN (via FxF/Y motif). Part of the BRCA1-associated genome surveillance complex (BASC), which contains BRCA1, MSH2, MSH6, MLH1, ATM, BLM, PMS2 and the RAD50-MRE11-NBN protein complex. This association could be a dynamic process changing throughout the cell cycle and within subnuclear domains. Interacts with RAD17; DNA damage promotes the association. Interacts with EEF1E1; the interaction, induced on DNA damage, up-regulates TP53. Interacts with KAT8, NABP2, ATMIN and CEP164. Interacts with AP2B1 and AP3B2; the interaction occurs in cytoplasmic vesicles. Interacts with TELO2 and TTI1. Interacts with DDX1. Interacts with BRAT1. Interacts with CYREN (via XLF motif). Interacts (via microbody targeting signal) with PEX5; promoting translocation to peroxisomes in response to reactive oxygen species (ROS). Post-translationally, phosphorylated by NUAK1/ARK5. Autophosphorylation on Ser-367, Ser-1899, Ser-1987 correlates with DNA damage-mediated activation of the kinase. In terms of processing, phosphorylated by NUAK1/ARK5. Autophosphorylation on Ser-367, Ser-1899, Ser-1987 correlates with DNA damage-mediated activation of the kinase. During the late stages of DNA damage response, dephosphorylated following deacetylation by SIRT7, leading to ATM deactivation. Acetylation, on DNA damage, is required for activation of the kinase activity, dimer-monomer transition, and subsequent autophosphorylation on Ser-1987. Acetylated in vitro by KAT5/TIP60. Deacetylated by SIRT7 during the late stages of DNA damage response, promoting ATM dephosphorylation and subsequent deactivation. In terms of tissue distribution, expressed in brain, skeletal muscle, testis, followed by spleen, lung, kidney, heart, liver and thymus. Ubiquitously expressed in embryonal tissues.

The protein localises to the nucleus. The protein resides in the cytoplasmic vesicle. It localises to the cytoplasm. Its subcellular location is the cytoskeleton. It is found in the microtubule organizing center. The protein localises to the centrosome. The protein resides in the peroxisome matrix. The catalysed reaction is L-seryl-[protein] + ATP = O-phospho-L-seryl-[protein] + ADP + H(+). It catalyses the reaction L-threonyl-[protein] + ATP = O-phospho-L-threonyl-[protein] + ADP + H(+). With respect to regulation, activated by the MRN (MRE11-RAD50-NBS1) complex in response to DNA double strand breaks (DSBs), which recruits ATM to DSBs and promotes its activation. Inhibited by wortmannin. Functionally, serine/threonine protein kinase which activates checkpoint signaling upon double strand breaks (DSBs), apoptosis and genotoxic stresses such as ionizing ultraviolet A light (UVA), thereby acting as a DNA damage sensor. Recognizes the substrate consensus sequence [ST]-Q. Phosphorylates 'Ser-139' of histone variant H2AX at double strand breaks (DSBs), thereby regulating DNA damage response mechanism. Also plays a role in pre-B cell allelic exclusion, a process leading to expression of a single immunoglobulin heavy chain allele to enforce clonality and monospecific recognition by the B-cell antigen receptor (BCR) expressed on individual B-lymphocytes. After the introduction of DNA breaks by the RAG complex on one immunoglobulin allele, acts by mediating a repositioning of the second allele to pericentromeric heterochromatin, preventing accessibility to the RAG complex and recombination of the second allele. Also involved in signal transduction and cell cycle control. May function as a tumor suppressor. Necessary for activation of ABL1 and SAPK. Phosphorylates DYRK2, CHEK2, p53/TP53, FBXW7, FANCD2, NFKBIA, BRCA1, CREBBP/CBP, RBBP8/CTIP, FBXO46, MRE11, nibrin (NBN), RAD50, RAD17, PELI1, TERF1, UFL1, RAD9, UBQLN4 and DCLRE1C. May play a role in vesicle and/or protein transport. Could play a role in T-cell development, gonad and neurological function. Binds DNA ends. Plays a role in replication-dependent histone mRNA degradation. Phosphorylation of DYRK2 in nucleus in response to genotoxic stress prevents its MDM2-mediated ubiquitination and subsequent proteasome degradation. Phosphorylates ATF2 which stimulates its function in DNA damage response. Phosphorylates ERCC6 which is essential for its chromatin remodeling activity at DNA double-strand breaks. Phosphorylates TTC5/STRAP at 'Ser-203' in the cytoplasm in response to DNA damage, which promotes TTC5/STRAP nuclear localization. Also involved in pexophagy by mediating phosphorylation of PEX5: translocated to peroxisomes in response to reactive oxygen species (ROS), and catalyzes phosphorylation of PEX5, promoting PEX5 ubiquitination and induction of pexophagy. The chain is Serine-protein kinase ATM (Atm) from Mus musculus (Mouse).